Reading from the N-terminus, the 459-residue chain is ATP synthase subunit beta (459 aa).

148–155 (GGAGVGKT) is an ATP binding site.

The protein belongs to the ATPase alpha/beta chains family. As to quaternary structure, F-type ATPases have 2 components, CF(1) - the catalytic core - and CF(0) - the membrane proton channel. CF(1) has five subunits: alpha(3), beta(3), gamma(1), delta(1), epsilon(1). CF(0) has three main subunits: a(1), b(2) and c(9-12). The alpha and beta chains form an alternating ring which encloses part of the gamma chain. CF(1) is attached to CF(0) by a central stalk formed by the gamma and epsilon chains, while a peripheral stalk is formed by the delta and b chains.

The protein resides in the cell inner membrane. The catalysed reaction is ATP + H2O + 4 H(+)(in) = ADP + phosphate + 5 H(+)(out). Produces ATP from ADP in the presence of a proton gradient across the membrane. The catalytic sites are hosted primarily by the beta subunits. The polypeptide is ATP synthase subunit beta (Thioalkalivibrio sulfidiphilus (strain HL-EbGR7)).